A 293-amino-acid chain; its full sequence is DDRGK domain-containing protein 1 (293 aa).

At 1–6 (MWGPLI) the chain is on the lumenal side. A helical membrane pass occupies residues 7-27 (YALLGLAIVAAAFLFVRRSQA). At 28-293 (KEVVPVADDD…PADVDETTTA (266 aa)) the chain is on the cytoplasmic side. 2 disordered regions span residues 30–151 (VVPV…RQKE) and 273–293 (TDVE…TTTA). Composition is skewed to basic and acidic residues over residues 90-126 (KLQE…KERE) and 133-151 (ERQR…RQKE).

This sequence belongs to the DDRGK1 family.

Its subcellular location is the endoplasmic reticulum membrane. Functionally, substrate adapter for ufmylation, the covalent attachment of the ubiquitin-like modifier UFM1 to substrate proteins. This chain is DDRGK domain-containing protein 1, found in Monosiga brevicollis (Choanoflagellate).